The following is a 377-amino-acid chain: Chaperone protein DnaJ (377 aa).

Residues 5–69 (EYYDRLGLSK…QKRAAYDQYG (65 aa)) enclose the J domain. The segment at 133 to 215 (GAEKEIHYNR…CHGTGREKQS (83 aa)) adopts a CR-type zinc-finger fold. Residues Cys146, Cys149, Cys163, Cys166, Cys189, Cys192, Cys203, and Cys206 each contribute to the Zn(2+) site. CXXCXGXG motif repeat units follow at residues 146–153 (CKTCSGSG), 163–170 (CGRCHGHG), 189–196 (CDVCHGTG), and 203–210 (CQTCHGTG).

The protein belongs to the DnaJ family. Homodimer. The cofactor is Zn(2+).

The protein resides in the cytoplasm. Functionally, participates actively in the response to hyperosmotic and heat shock by preventing the aggregation of stress-denatured proteins and by disaggregating proteins, also in an autonomous, DnaK-independent fashion. Unfolded proteins bind initially to DnaJ; upon interaction with the DnaJ-bound protein, DnaK hydrolyzes its bound ATP, resulting in the formation of a stable complex. GrpE releases ADP from DnaK; ATP binding to DnaK triggers the release of the substrate protein, thus completing the reaction cycle. Several rounds of ATP-dependent interactions between DnaJ, DnaK and GrpE are required for fully efficient folding. Also involved, together with DnaK and GrpE, in the DNA replication of plasmids through activation of initiation proteins. The chain is Chaperone protein DnaJ from Streptococcus thermophilus (strain CNRZ 1066).